Consider the following 51-residue polypeptide: MRDKIKLVSSAGTGFFYTTDKNKRNMPGKMEIKKYDPVVRKHVMFKEAKIK.

Belongs to the bacterial ribosomal protein bL33 family.

In Alteromonas mediterranea (strain DSM 17117 / CIP 110805 / LMG 28347 / Deep ecotype), this protein is Large ribosomal subunit protein bL33.